The chain runs to 160 residues: Transcription factor 12 (160 aa).

Positions 1–58 (NKEKDENLHEPPSSDDMKSDDESSQKDIKVSSRGRTSTNEDEDLNPEQKIEREKERRM) are disordered. Over residues 15–30 (DDMKSDDESSQKDIKV) the composition is skewed to basic and acidic residues. Position 19 is a phosphoserine (serine 19). A Glycyl lysine isopeptide (Lys-Gly) (interchain with G-Cter in SUMO2) cross-link involves residue lysine 29. At threonine 36 the chain carries Phosphothreonine. Serine 37 bears the Phosphoserine mark. Over residues 46–58 (PEQKIEREKERRM) the composition is skewed to basic and acidic residues. Positions 55–108 (ERRMANNARERLRVRDINEAFKELGRMCQLHLKSEKPQTKLLILHQAVAVILSL) constitute a bHLH domain. Residues lysine 87 and lysine 131 each participate in a glycyl lysine isopeptide (Lys-Gly) (interchain with G-Cter in SUMO2) cross-link. Residues 110 to 133 (QQVRERNLNPKAACLKRREEEKVS) form a class A specific domain region. The disordered stretch occupies residues 132-160 (VSVVSAEPPTTLPGTHPGLSETTNPMGHM). Residues 139–150 (PPTTLPGTHPGL) are compositionally biased toward low complexity. Positions 151–160 (SETTNPMGHM) are enriched in polar residues.

In terms of assembly, efficient DNA binding requires dimerization with another bHLH protein. Forms homo- or heterooligomers with myogenin, E12 and ITF2 proteins. Interacts with PTF1A. Interacts with RUNX1T1. Interacts with NEUROD2. Interacts with BHLHA9.

It is found in the nucleus. Functionally, transcriptional regulator. Involved in the initiation of neuronal differentiation. Activates transcription by binding to the E box (5'-CANNTG-3'). May be involved in the functional network that regulates the development of the GnRH axis. This Papio hamadryas (Hamadryas baboon) protein is Transcription factor 12 (TCF12).